Here is a 321-residue protein sequence, read N- to C-terminus: UDP-N-acetyl-alpha-D-glucosaminuronate decarboxylase (321 aa).

NAD(+) contacts are provided by G12, F13, I14, D33, N34, Y36, G38, L76, T95, A117, Y148, and K152. The active-site Proton acceptor is Y148.

It belongs to the NAD(P)-dependent epimerase/dehydratase family. Homodimer. NAD(+) serves as cofactor.

It catalyses the reaction UDP-2-acetamido-2-deoxy-alpha-D-glucuronate + H(+) = UDP-N-acetyl-alpha-D-xylosamine + CO2. With respect to regulation, activity is completely inhibited by NADH but not by NADPH. Decarboxylase involved in the biosynthesis of the nucleotide-sugar UDP-N-acetylxylosamine (UDP-XylNAc). Catalyzes the NAD-dependent decarboxylation of UDP-N-acetylglucosaminuronic acid (UDP-GlcNAcA) to UDP-XylNAc. Cannot use other UDP-uronates, such as UDP-glucuronic acid (UDP-GlcA) and UDP-galacturonic acid (UDP-GalA). The sequence is that of UDP-N-acetyl-alpha-D-glucosaminuronate decarboxylase from Bacillus cytotoxicus (strain DSM 22905 / CIP 110041 / 391-98 / NVH 391-98).